The chain runs to 455 residues: Putative FBD-associated F-box protein At5g56400 (455 aa).

In terms of domain architecture, F-box spans 32–81; sequence VDKISDLPEDLLVHILSLLPTTNDIVATSGVSKRWESLWTKVHKLRFNDR. An FBD domain is found at 372–421; it reads WNQQPSYVPECLTKSLEIFEWRNYKATFRERDVAVYILKNSTCLKKTVIS.

The sequence is that of Putative FBD-associated F-box protein At5g56400 from Arabidopsis thaliana (Mouse-ear cress).